Reading from the N-terminus, the 363-residue chain is U-box domain-containing protein 62 (363 aa).

The segment at 74–117 is disordered; sequence KPIIGNPNDSGGSDGEDDVDVEEEDEDDDLDGNEGDIGMNKDAG. Over residues 87–107 the composition is skewed to acidic residues; sequence DGEDDVDVEEEDEDDDLDGNE. Positions 181–253 constitute a U-box domain; that stretch reads SLRTILSDPT…QAFCREENSQ (73 aa). The tract at residues 343 to 363 is disordered; the sequence is AKAPEDPSAKATPNKMVSNWL.

The catalysed reaction is S-ubiquitinyl-[E2 ubiquitin-conjugating enzyme]-L-cysteine + [acceptor protein]-L-lysine = [E2 ubiquitin-conjugating enzyme]-L-cysteine + N(6)-ubiquitinyl-[acceptor protein]-L-lysine.. Its pathway is protein modification; protein ubiquitination. Functionally, functions as an E3 ubiquitin ligase. This chain is U-box domain-containing protein 62 (PUB62), found in Arabidopsis thaliana (Mouse-ear cress).